We begin with the raw amino-acid sequence, 596 residues long: Actin-histidine N-methyltransferase (596 aa).

S-adenosyl-L-methionine contacts are provided by residues Arg-75, 104 to 106 (EGY), Arg-254, 275 to 279 (DMCNH), and 325 to 327 (NGF). The SET domain occupies 94 to 314 (DGFEISNFAD…EGEQIYIFYG (221 aa)). A disordered region spans residues 556 to 596 (QCKDLNGTQEDPPGGGAVVKEIEKHDPSAKRTEGEPKDAGK). Over residues 575-596 (KEIEKHDPSAKRTEGEPKDAGK) the composition is skewed to basic and acidic residues.

The protein belongs to the class V-like SAM-binding methyltransferase superfamily. SETD3 actin-histidine methyltransferase family.

Its subcellular location is the cytoplasm. It catalyses the reaction L-histidyl-[protein] + S-adenosyl-L-methionine = N(tele)-methyl-L-histidyl-[protein] + S-adenosyl-L-homocysteine + H(+). Its function is as follows. Protein-histidine N-methyltransferase that specifically mediates 3-methylhistidine (tele-methylhistidine) methylation of actin at 'His-73'. Does not have protein-lysine N-methyltransferase activity and probably only catalyzes histidine methylation of actin. The chain is Actin-histidine N-methyltransferase from Danio rerio (Zebrafish).